The chain runs to 447 residues: Neuronal acetylcholine receptor subunit alpha-10 (447 aa).

An N-terminal signal peptide occupies residues 1–24 (MGTRSHYLDLGFLLLLFLPAECLG). At 25–237 (AEGRLAHKLF…FTLLLRRRAA (213 aa)) the chain is on the extracellular side. N-linked (GlcNAc...) asparagine glycosylation is found at asparagine 40 and asparagine 56. Disulfide bonds link cysteine 154–cysteine 168 and cysteine 218–cysteine 219. 3 helical membrane passes run 238-258 (AYVCNLLLPCVFISLLAPLAF), 268-288 (VSLGVTVLLALTVFQLILAES), and 302-322 (YMATMTMVTFSTALTILIMNL). Residues 323 to 425 (HYCGPNAHPV…WKRLARVMDR (103 aa)) lie on the Cytoplasmic side of the membrane. Residues 426-446 (FFLGIFFCMALVMSLIVLVQA) traverse the membrane as a helical segment.

This sequence belongs to the ligand-gated ion channel (TC 1.A.9) family. Acetylcholine receptor (TC 1.A.9.1) subfamily. Alpha-10/CHRNA10 sub-subfamily. Forms homo- or heterooligomeric channels in conjunction with CHRNA10. The native outer hair cell receptor may be composed of CHRNA9:CHRNA10 heterooligomers. Found in the stoichiometric form (CHRNA9)2:(CHRNA10)3. As to expression, expressed in the outer hair cells of the cochlea and the neurons of dorsal root ganglia.

The protein resides in the synaptic cell membrane. It localises to the cell membrane. The enzyme catalyses Ca(2+)(in) = Ca(2+)(out). It carries out the reaction Mg(2+)(in) = Mg(2+)(out). It catalyses the reaction K(+)(in) = K(+)(out). The catalysed reaction is Na(+)(in) = Na(+)(out). With respect to regulation, activated by a myriad of ligands such as acetylcholine. AChR activity is inhibited by the antagonist alpha-conotoxins RgIA and GeXXA, small disulfide-constrained peptides from cone snails. Component of neuronal acetylcholine receptors (nAChRs) that function as pentameric, ligand-gated cation channels with high calcium permeability among other activities. nAChRs are excitatory neurotrasnmitter receptors formed by a collection of nAChR subunits known to mediate synaptic transmission in the nervous system and the neuromuscular junction. Each nAchR subunit confers differential attributes to channel properties, including activation, deactivation and desensitization kinetics, pH sensitivity, cation permeability, and binding to allosteric modulators. Forms heteropentamers with CHRNA9. Expressed in the inner ear, in sympathetic neurons and in other non-neuronal cells, such as skin keratinocytes and lymphocytes. nAChR formed by CHRNA9:CHRNA10 mediate central nervous system control of auditory and vestibular sensory processing. The channel is permeable to a range of divalent cations including calcium, the influx of which may activate a potassium current which hyperpolarizes the cell membrane. In the ear, mediates synaptic transmission between efferent olivocochlear fibers and hair cells of the cochlea, this may lead to a reduction in basilar membrane motion, altering the activity of auditory nerve fibers and reducing the range of dynamic hearing. This may protect against acoustic trauma. May also regulate keratinocyte adhesion. The protein is Neuronal acetylcholine receptor subunit alpha-10 (Chrna10) of Rattus norvegicus (Rat).